Here is a 127-residue protein sequence, read N- to C-terminus: Small ribosomal subunit protein uS12 (127 aa).

Residues G11–K20 are compositionally biased toward basic residues. The interval G11 to K30 is disordered. At D89 the chain carries 3-methylthioaspartic acid. A disordered region spans residues A105–K127. Basic residues predominate over residues Q112 to K127.

The protein belongs to the universal ribosomal protein uS12 family. As to quaternary structure, part of the 30S ribosomal subunit. Contacts proteins S8 and S17. May interact with IF1 in the 30S initiation complex.

With S4 and S5 plays an important role in translational accuracy. Its function is as follows. Interacts with and stabilizes bases of the 16S rRNA that are involved in tRNA selection in the A site and with the mRNA backbone. Located at the interface of the 30S and 50S subunits, it traverses the body of the 30S subunit contacting proteins on the other side and probably holding the rRNA structure together. The combined cluster of proteins S8, S12 and S17 appears to hold together the shoulder and platform of the 30S subunit. The protein is Small ribosomal subunit protein uS12 of Thermotoga maritima (strain ATCC 43589 / DSM 3109 / JCM 10099 / NBRC 100826 / MSB8).